Reading from the N-terminus, the 498-residue chain is PE-PGRS family protein PE_PGRS33 (498 aa).

Residues 1–30 (MSFVVTIPEALAAVATDLAGIGSTIGTANA) form an essential for translocation to the cell surface region. Residues 1–93 (MSFVVTIPEA…AGSYAAAEAA (93 aa)) form the PE domain. Positions 140-260 (GNGGAGGSGA…GLFFGVGGAG (121 aa)) are interacts with TLR2.

The protein belongs to the mycobacterial PE family. PGRS subfamily. As to quaternary structure, interacts with human TLR2.

The protein resides in the secreted. The protein localises to the cell wall. It is found in the cell surface. Its subcellular location is the cell outer membrane. Its activity is regulated as follows. Binding of Ca(2+) to PE_PGRS33 induces conformational changes and increases affinity for TLR2. Functionally, induces TNF-alpha release through human Toll-like receptor 2 (TLR2) signaling pathway, leading to macrophage apoptosis. The signaling pathway involves TLR2-dependent activation of the mitogen-activated protein kinase kinase kinase 5 (ASK1), which activates the p38 and JNK MAPKs, leading to enhanced expression of TNF-alpha and tumor necrosis factor receptor superfamily member 1A (TNFRI) genes. Signals are amplified through classical caspase 8-dependent mitochondrial release of cytochrome c, leading to the activation of caspases 9 and 3. Mediates Ca(2+)-dependent up-regulation of the anti-inflammatory cytokine IL-10. Mediates entry into macrophages in a TLR2-dependent mechanism and activates the TLR2-dependent pro-adhesive pathway. This Mycobacterium tuberculosis (strain ATCC 25618 / H37Rv) protein is PE-PGRS family protein PE_PGRS33.